Consider the following 307-residue polypeptide: Ornithine carbamoyltransferase (307 aa).

Carbamoyl phosphate-binding positions include 53-56 (STRT), glutamine 80, arginine 104, and 131-134 (HPCQ). L-ornithine is bound by residues asparagine 162, aspartate 220, and 224–225 (SM). Residues 260 to 261 (CL) and arginine 288 contribute to the carbamoyl phosphate site.

This sequence belongs to the aspartate/ornithine carbamoyltransferase superfamily. OTCase family.

It localises to the cytoplasm. It carries out the reaction carbamoyl phosphate + L-ornithine = L-citrulline + phosphate + H(+). The protein operates within amino-acid biosynthesis; L-arginine biosynthesis; L-arginine from L-ornithine and carbamoyl phosphate: step 1/3. Its function is as follows. Reversibly catalyzes the transfer of the carbamoyl group from carbamoyl phosphate (CP) to the N(epsilon) atom of ornithine (ORN) to produce L-citrulline. The polypeptide is Ornithine carbamoyltransferase (Nitrosomonas eutropha (strain DSM 101675 / C91 / Nm57)).